The following is a 156-amino-acid chain: Sperm acrosome-associated protein 5 (156 aa).

Residues 1–18 (MQVSGTIVVILMAANVEA) form the signal peptide. The C-type lysozyme domain occupies 19–147 (KIYERCDLAK…SEWLRGCHMN (129 aa)). Intrachain disulfides connect Cys-24-Cys-144, Cys-48-Cys-132, Cys-82-Cys-97, and Cys-93-Cys-111. Residue Glu-53 is part of the active site.

The protein belongs to the glycosyl hydrolase 22 family.

Its subcellular location is the secreted. The catalysed reaction is Hydrolysis of (1-&gt;4)-beta-linkages between N-acetylmuramic acid and N-acetyl-D-glucosamine residues in a peptidoglycan and between N-acetyl-D-glucosamine residues in chitodextrins.. This is Sperm acrosome-associated protein 5 (SPACA5) from Bos taurus (Bovine).